A 165-amino-acid chain; its full sequence is Cyclic pyranopterin monophosphate synthase (165 aa).

Substrate-binding positions include 83-85 (FCH) and 120-121 (ME). Asp-135 is a catalytic residue.

Belongs to the MoaC family. Homohexamer; trimer of dimers.

It carries out the reaction (8S)-3',8-cyclo-7,8-dihydroguanosine 5'-triphosphate = cyclic pyranopterin phosphate + diphosphate. The protein operates within cofactor biosynthesis; molybdopterin biosynthesis. In terms of biological role, catalyzes the conversion of (8S)-3',8-cyclo-7,8-dihydroguanosine 5'-triphosphate to cyclic pyranopterin monophosphate (cPMP). This chain is Cyclic pyranopterin monophosphate synthase, found in Xanthomonas campestris pv. campestris (strain 8004).